The primary structure comprises 500 residues: Protein-tyrosine sulfotransferase (500 aa).

The signal sequence occupies residues 1 to 24; it reads MQMNSVWKLSLGLLLLSSVIGSFA. The Lumenal portion of the chain corresponds to 25–467; the sequence is ELDFGHCETL…SVLGEMGEEK (443 aa). Catalysis depends on residues Arg-121 and Glu-142. 6 N-linked (GlcNAc...) asparagine glycosylation sites follow: Asn-156, Asn-248, Asn-315, Asn-343, Asn-359, and Asn-395. The chain crosses the membrane as a helical span at residues 468–488; it reads LWKFVPVALMLLLIVLFFLFV. Residues 489–500 are Cytoplasmic-facing; sequence NAKRRRTSKVKI.

Expressed throughout the plant body, highest levels of expression are in the root apical meristem.

It is found in the golgi apparatus membrane. The catalysed reaction is L-tyrosyl-[protein] + 3'-phosphoadenylyl sulfate = O-sulfo-L-tyrosine-[protein] + adenosine 3',5'-bisphosphate + H(+). Functionally, catalyzes the O-sulfation of tyrosine residues within acidic motifs of polypeptides. This is Protein-tyrosine sulfotransferase (TPST) from Arabidopsis thaliana (Mouse-ear cress).